A 235-amino-acid polypeptide reads, in one-letter code: Large ribosomal subunit protein uL1 (235 aa).

Belongs to the universal ribosomal protein uL1 family. Part of the 50S ribosomal subunit.

Its function is as follows. Binds directly to 23S rRNA. The L1 stalk is quite mobile in the ribosome, and is involved in E site tRNA release. Protein L1 is also a translational repressor protein, it controls the translation of the L11 operon by binding to its mRNA. The protein is Large ribosomal subunit protein uL1 of Solidesulfovibrio magneticus (strain ATCC 700980 / DSM 13731 / RS-1) (Desulfovibrio magneticus).